The sequence spans 416 residues: Nucleoside transporter 1 (416 aa).

Over residues 1–26 (MSISKESSKTMIDIEKKGGEGKDGKG) the composition is skewed to basic and acidic residues. Positions 1-28 (MSISKESSKTMIDIEKKGGEGKDGKGGS) are disordered. Residues 1–35 (MSISKESSKTMIDIEKKGGEGKDGKGGSKMTKNEQ) are Cytoplasmic-facing. A helical membrane pass occupies residues 36-58 (FLLPFTFILIGLSSLNVWNTALG). The Extracellular portion of the chain corresponds to 59–64 (LNINFK). Residues 65-83 (YNTFQITGLVCSSIIALFV) form a helical membrane-spanning segment. The Cytoplasmic segment spans residues 84–87 (KVPK). The helical transmembrane segment at 88-107 (MLLPFALGGLAMLCAGFQIA) threads the bilayer. The Extracellular segment spans residues 108-119 (HQCFTFEQFDTY). The chain crosses the membrane as a helical span at residues 120–139 (CLIAFIVIGIMAGLAQTIAF). Residues 140-148 (SVGTTMEEN) lie on the Cytoplasmic side of the membrane. A helical membrane pass occupies residues 149–171 (MGGYMSAGIGISGVFIFIINLLL). At 172–187 (DQIVPDQKKFNVNEAK) the chain is on the extracellular side. A helical membrane pass occupies residues 188–210 (LLYLFLICELCLVLAIIFSVCNL). The Cytoplasmic portion of the chain corresponds to 211-241 (ELSSSKTSKEEEYSDKEQGLSYLELLKDSYK). A helical transmembrane segment spans residues 242 to 261 (AILAMFLVNWLSLQLFPGVG). Residues 262-273 (HKKWQESHNISD) are Extracellular-facing. Residues 274–292 (YNVTLIVGMFQVFDFVSRY) form a helical membrane-spanning segment. The Cytoplasmic portion of the chain corresponds to 293-311 (PPNLSHMKIFKWFTFSLNK). Residues 312–331 (LLLLNFLRLLFIPWFVINAA) form a helical membrane-spanning segment. The Extracellular segment spans residues 332 to 343 (CDLPIFTNIVQQ). The chain crosses the membrane as a helical span at residues 344 to 366 (CVCMAMLAFTNGWFNTVPFLVFV). Residues 367 to 380 (QELKKAKKKKDIET) lie on the Cytoplasmic side of the membrane. Residues 381–403 (ISTFLVVAMFVGLFMGIWTTYIY) form a helical membrane-spanning segment. At 404–416 (DFFPIVIKRYVVP) the chain is on the extracellular side.

It belongs to the SLC29A/ENT transporter (TC 2.A.57) family.

It localises to the cell membrane. It carries out the reaction inosine(in) = inosine(out). It catalyses the reaction adenosine(in) = adenosine(out). The enzyme catalyses hypoxanthine(out) = hypoxanthine(in). The catalysed reaction is guanosine(in) = guanosine(out). It carries out the reaction guanine(out) = guanine(in). It catalyses the reaction thymidine(in) = thymidine(out). The enzyme catalyses uridine(out) = uridine(in). The catalysed reaction is uracil(in) = uracil(out). It carries out the reaction thymine(out) = thymine(in). It catalyses the reaction adenine(out) = adenine(in). The enzyme catalyses cytosine(out) = cytosine(in). The catalysed reaction is xanthine(out) = xanthine(in). In terms of biological role, nucleoside and nucleobase transporter with a broad substrate specificity. The polypeptide is Nucleoside transporter 1 (Plasmodium vivax (strain Salvador I)).